A 337-amino-acid chain; its full sequence is Pyridoxal 5'-phosphate synthase subunit PdxS (337 aa).

Asp-63 lines the D-ribose 5-phosphate pocket. Lys-120 acts as the Schiff-base intermediate with D-ribose 5-phosphate in catalysis. D-ribose 5-phosphate is bound at residue Gly-192. Residue Lys-204 participates in D-glyceraldehyde 3-phosphate binding. D-ribose 5-phosphate-binding positions include Gly-253 and 274–275 (GS).

It belongs to the PdxS/SNZ family. In the presence of PdxT, forms a dodecamer of heterodimers.

It catalyses the reaction aldehydo-D-ribose 5-phosphate + D-glyceraldehyde 3-phosphate + L-glutamine = pyridoxal 5'-phosphate + L-glutamate + phosphate + 3 H2O + H(+). It participates in cofactor biosynthesis; pyridoxal 5'-phosphate biosynthesis. Its function is as follows. Catalyzes the formation of pyridoxal 5'-phosphate from ribose 5-phosphate (RBP), glyceraldehyde 3-phosphate (G3P) and ammonia. The ammonia is provided by the PdxT subunit. Can also use ribulose 5-phosphate and dihydroxyacetone phosphate as substrates, resulting from enzyme-catalyzed isomerization of RBP and G3P, respectively. The sequence is that of Pyridoxal 5'-phosphate synthase subunit PdxS from Aeropyrum pernix (strain ATCC 700893 / DSM 11879 / JCM 9820 / NBRC 100138 / K1).